We begin with the raw amino-acid sequence, 174 residues long: Ribosome maturation factor RimP (174 aa).

It belongs to the RimP family.

The protein resides in the cytoplasm. Required for maturation of 30S ribosomal subunits. This chain is Ribosome maturation factor RimP, found in Acinetobacter baumannii (strain SDF).